Reading from the N-terminus, the 233-residue chain is Large ribosomal subunit protein uL1 (233 aa).

This sequence belongs to the universal ribosomal protein uL1 family. In terms of assembly, part of the 50S ribosomal subunit.

Binds directly to 23S rRNA. The L1 stalk is quite mobile in the ribosome, and is involved in E site tRNA release. Functionally, protein L1 is also a translational repressor protein, it controls the translation of the L11 operon by binding to its mRNA. This chain is Large ribosomal subunit protein uL1, found in Geobacillus thermodenitrificans (strain NG80-2).